The sequence spans 40 residues: Natriuretic peptide HsNP-b (40 aa).

Residues 1–8 (SGSKTAKI) constitute a propeptide that is removed on maturation. The interval 1–40 (SGSKTAKIGDGCFGVPIDHIGSTTDLGCGRPRPKPTPRGS) is disordered. The cysteines at positions 12 and 28 are disulfide-linked. The span at 31-40 (PRPKPTPRGS) shows a compositional bias: basic residues.

Belongs to the natriuretic peptide family. As to expression, expressed by the venom gland.

The protein localises to the secreted. Snake venom natriuretic peptide that targets both NPR1 and NPR2. Exhibits hypotensive and vasodepressor activities. The sequence is that of Natriuretic peptide HsNP-b from Hoplocephalus stephensii (Stephens's banded snake).